Here is an 86-residue protein sequence, read N- to C-terminus: Small ribosomal subunit protein eS21 (86 aa).

This sequence belongs to the eukaryotic ribosomal protein eS21 family. Component of the 40S small ribosomal subunit.

The protein localises to the cytoplasm. It localises to the cytosol. It is found in the rough endoplasmic reticulum. This is Small ribosomal subunit protein eS21 (RPS21) from Suberites domuncula (Sponge).